A 132-amino-acid polypeptide reads, in one-letter code: UPF0299 membrane protein KPN78578_25390 (132 aa).

4 helical membrane passes run 5 to 25 (LTII…LYAG), 38 to 60 (GSII…PQWV), 66 to 86 (ILIR…MQYW), and 93 to 113 (LGPV…VVSW).

It belongs to the UPF0299 family.

The protein localises to the cell inner membrane. The polypeptide is UPF0299 membrane protein KPN78578_25390 (Klebsiella pneumoniae subsp. pneumoniae (strain ATCC 700721 / MGH 78578)).